Here is a 138-residue protein sequence, read N- to C-terminus: Small ribosomal subunit protein uS11c (138 aa).

Positions methionine 1 to arginine 23 are disordered. Over residues glycine 9–arginine 23 the composition is skewed to basic residues.

The protein belongs to the universal ribosomal protein uS11 family. Part of the 30S ribosomal subunit.

Its subcellular location is the plastid. The protein localises to the chloroplast. The chain is Small ribosomal subunit protein uS11c from Coffea arabica (Arabian coffee).